Reading from the N-terminus, the 282-residue chain is Small-conductance mechanosensitive channel (282 aa).

Over 1–23 (MWADIYHKLVEIYDIKAVKFLLD) the chain is Periplasmic. Residues 24 to 46 (VLKILIIAFIGIKFADFLIYRFY) form a helical membrane-spanning segment. At 47–66 (KLYSKSKIQLPQRKIDTLTS) the chain is on the cytoplasmic side. The helical transmembrane segment at 67-87 (LTKNAVRYIIYFLAGASILKL) threads the bilayer. The Periplasmic portion of the chain corresponds to 88–89 (FN). The chain crosses the membrane as a helical span at residues 90–110 (IDMTSLLAVAGIGSLAIGFGA). The Cytoplasmic portion of the chain corresponds to 111–282 (QNLVKDMISG…TVILSEKKTN (172 aa)).

It belongs to the MscS (TC 1.A.23) family. In terms of assembly, homoheptamer.

The protein resides in the cell inner membrane. Functionally, mechanosensitive ion channel that participates in the regulation of osmotic pressure changes within the cell, opening in response to stretch forces in the membrane lipid bilayer, without the need for other proteins. Has high selectivity for anions, and may contribute to resistance to hypoosmotic shock. This chain is Small-conductance mechanosensitive channel, found in Caldanaerobacter subterraneus subsp. tengcongensis (strain DSM 15242 / JCM 11007 / NBRC 100824 / MB4) (Thermoanaerobacter tengcongensis).